The following is a 404-amino-acid chain: Serpin-Z2B (404 aa).

Residues 349–373 (GTEAAAATACTMKFLCLTLTSPVDF) are RCL.

It belongs to the serpin family.

Its function is as follows. Probable serine protease inhibitor. The sequence is that of Serpin-Z2B from Oryza sativa subsp. japonica (Rice).